A 325-amino-acid chain; its full sequence is Ferrochelatase (325 aa).

Residues H172 and E267 each contribute to the Fe cation site.

It belongs to the ferrochelatase family.

Its subcellular location is the cytoplasm. The catalysed reaction is heme b + 2 H(+) = protoporphyrin IX + Fe(2+). Its pathway is porphyrin-containing compound metabolism; protoheme biosynthesis; protoheme from protoporphyrin-IX: step 1/1. Functionally, catalyzes the ferrous insertion into protoporphyrin IX. The chain is Ferrochelatase from Acidobacterium capsulatum (strain ATCC 51196 / DSM 11244 / BCRC 80197 / JCM 7670 / NBRC 15755 / NCIMB 13165 / 161).